A 946-amino-acid polypeptide reads, in one-letter code: RIPOR family member 3 (946 aa).

Phosphoserine occurs at positions 9, 24, and 340. T345 is modified (phosphothreonine). Phosphoserine is present on residues S351 and S384. Positions 390–512 are disordered; it reads GPSLRSQSQE…GDREDGPGVA (123 aa). Over residues 437–446 the composition is skewed to basic and acidic residues; sequence SIEEEAREDP. Residues 478 to 495 are compositionally biased toward polar residues; the sequence is SLPQGSLFHSGTASSSQN. The segment covering 496–508 has biased composition (basic and acidic residues); that stretch reads GHEEGATGDREDG.

Belongs to the RIPOR family.

This chain is RIPOR family member 3, found in Homo sapiens (Human).